The chain runs to 373 residues: 3 beta-hydroxysteroid dehydrogenase/Delta 5--&gt;4-isomerase type 4 (373 aa).

Y155 serves as the catalytic Proton acceptor. An NAD(+)-binding site is contributed by K159. A helical transmembrane segment spans residues 288 to 308; it reads LPLLYWLAFLLEIVSFFLHPV. K350 bears the N6-acetyllysine mark.

Belongs to the 3-beta-HSD family. Skin, placenta, also detectable in ovary and adrenal gland.

The protein resides in the endoplasmic reticulum membrane. Its subcellular location is the mitochondrion membrane. It catalyses the reaction a 3beta-hydroxy-Delta(5)-steroid + NAD(+) = a 3-oxo-Delta(5)-steroid + NADH + H(+). The catalysed reaction is a 3-oxo-Delta(5)-steroid = a 3-oxo-Delta(4)-steroid. Its pathway is lipid metabolism; steroid biosynthesis. Its function is as follows. 3-beta-HSD is a bifunctional enzyme, that catalyzes the oxidative conversion of Delta(5)-ene-3-beta-hydroxy steroid, and the oxidative conversion of ketosteroids. The 3-beta-HSD enzymatic system plays a crucial role in the biosynthesis of all classes of hormonal steroids. The chain is 3 beta-hydroxysteroid dehydrogenase/Delta 5--&gt;4-isomerase type 4 (Hsd3b6) from Rattus norvegicus (Rat).